Reading from the N-terminus, the 315-residue chain is Polyprenyl transferase mpaA (315 aa).

8 consecutive transmembrane segments (helical) span residues isoleucine 40 to alanine 60, leucine 84 to phenylalanine 103, isoleucine 118 to leucine 135, valine 143 to tryptophan 163, glycine 174 to phenylalanine 194, leucine 224 to isoleucine 244, tryptophan 248 to phenylalanine 268, and isoleucine 279 to glycine 299.

The protein belongs to the UbiA prenyltransferase family. Mg(2+) serves as cofactor.

Its subcellular location is the golgi apparatus membrane. The enzyme catalyses 5,7-dihydroxy-4-methylphthalide + (2E,6E)-farnesyl diphosphate = 4-farnesyl-3,5-dihydroxy-6-methylphthalide + diphosphate. It functions in the pathway secondary metabolite biosynthesis; terpenoid biosynthesis. In terms of biological role, polyprenyl transferase; part of the gene cluster that mediates the biosynthesis of mycophenolic acid (MPA), the first isolated antibiotic natural product in the world obtained from a culture of Penicillium brevicompactum in 1893. MpaA is a Golgi apparatus-associated enzyme that catalyzes the prenylation of 5,7-dihydroxy-4,6-dimethylphthalide (DHMP) to yield farnesyl-DHMP (FDHMP). The first step of the pathway is the synthesis of 5-methylorsellinic acid (5MOA) by the cytosolic polyketide synthase mpaC. 5MOA is then converted to the phthalide compound 5,7-dihydroxy-4,6-dimethylphthalide (DHMP) by the endoplasmic reticulum-bound cytochrome P450 monooxygenase mpaDE. MpaDE first catalyzes hydroxylation of 5-MOA to 4,6-dihydroxy-2-(hydroxymethyl)-3-methylbenzoic acid (DHMB). MpaDE then acts as a lactone synthase that catalyzes the ring closure to convert DHMB into DHMP. The next step is the prenylation of DHMP by the Golgi apparatus-associated prenyltransferase mpaA to yield farnesyl-DHMP (FDHMP). The ER-bound oxygenase mpaB then mediates the oxidative cleavage the C19-C20 double bond in FDHMP to yield FDHMP-3C via a mycophenolic aldehyde intermediate. The O-methyltransferase mpaG catalyzes the methylation of FDHMP-3C to yield MFDHMP-3C. After the cytosolic methylation of FDHMP-3C, MFDHMP-3C enters into peroxisomes probably via free diffusion due to its low molecular weight. Upon a peroxisomal CoA ligation reaction, catalyzed by a beta-oxidation component enzyme acyl-CoA ligase ACL891, MFDHMP-3C-CoA would then be restricted to peroxisomes for the following beta-oxidation pathway steps. The peroxisomal beta-oxidation machinery than converts MFDHMP-3C-CoA into MPA_CoA, via a beta-oxidation chain-shortening process. Finally mpaH acts as a peroxisomal acyl-CoA hydrolase with high substrate specificity toward MPA-CoA to release the final product MPA. The chain is Polyprenyl transferase mpaA from Penicillium brevicompactum.